A 1164-amino-acid polypeptide reads, in one-letter code: DNA-directed RNA polymerase 132 kDa polypeptide (1164 aa).

This sequence belongs to the RNA polymerase beta chain family. As to quaternary structure, the DNA-dependent RNA polymerase used for intermediate and late genes expression consists of eight subunits (147) kDa, (133) kDa, (35) kDa, (30) kDa, (22) kDa, (19) kDa, (18) kDa and (7) kDa totalling more than 500 kDa in mass. The same holoenzyme, with the addition of the transcription-specificity factor RAP94, is used for early gene expression.

The protein resides in the virion. It carries out the reaction RNA(n) + a ribonucleoside 5'-triphosphate = RNA(n+1) + diphosphate. Its function is as follows. Part of the DNA-dependent RNA polymerase which catalyzes the transcription of viral DNA into RNA using the four ribonucleoside triphosphates as substrates. Responsible for the transcription of early, intermediate and late genes. DNA-dependent RNA polymerase associates with the early transcription factor (ETF), itself composed of D6 and A7, thereby allowing the early genes transcription. Late transcription, and probably also intermediate transcription, require newly synthesized RNA polymerase. The sequence is that of DNA-directed RNA polymerase 132 kDa polypeptide (RPO132) from Bos taurus (Bovine).